Here is a 117-residue protein sequence, read N- to C-terminus: Prefoldin subunit beta (117 aa).

The protein belongs to the prefoldin subunit beta family. Heterohexamer of two alpha and four beta subunits.

It localises to the cytoplasm. In terms of biological role, molecular chaperone capable of stabilizing a range of proteins. Seems to fulfill an ATP-independent, HSP70-like function in archaeal de novo protein folding. The sequence is that of Prefoldin subunit beta from Methanosarcina barkeri (strain Fusaro / DSM 804).